A 383-amino-acid chain; its full sequence is uncharacterized protein (383 aa).

It belongs to the peptidase M20 family.

This is an uncharacterized protein from Staphylococcus aureus (strain bovine RF122 / ET3-1).